The primary structure comprises 131 residues: Methylglyoxal synthase (131 aa).

One can recognise an MGS-like domain in the interval 1–131; the sequence is MKIALIAHDK…GDLDYRKFRK (131 aa). Substrate is bound by residues His-8, Lys-12, 34 to 37, and 54 to 55; these read TGTT and SG. Asp-60 (proton donor/acceptor) is an active-site residue. His-87 is a binding site for substrate.

The protein belongs to the methylglyoxal synthase family.

It carries out the reaction dihydroxyacetone phosphate = methylglyoxal + phosphate. Functionally, catalyzes the formation of methylglyoxal from dihydroxyacetone phosphate. This chain is Methylglyoxal synthase, found in Bacillus cytotoxicus (strain DSM 22905 / CIP 110041 / 391-98 / NVH 391-98).